Consider the following 150-residue polypeptide: UPF0039 protein C11D3.02c (150 aa).

The region spanning 9–150 (KYFNSLDVKE…IPHVEMRLEL (142 aa)) is the N-acetyltransferase domain.

This sequence belongs to the UPF0039 (ElaA) family.

The protein is UPF0039 protein C11D3.02c of Schizosaccharomyces pombe (strain 972 / ATCC 24843) (Fission yeast).